The sequence spans 122 residues: Basic phospholipase A2 F16 (122 aa).

Intrachain disulfides connect Cys-26-Cys-115, Cys-28-Cys-44, Cys-43-Cys-95, Cys-49-Cys-122, Cys-50-Cys-88, Cys-57-Cys-81, and Cys-75-Cys-86. Residues Tyr-27, Gly-29, and Gly-31 each contribute to the Ca(2+) site. His-47 is a catalytic residue. Asp-48 lines the Ca(2+) pocket. Asp-89 is a catalytic residue.

This sequence belongs to the phospholipase A2 family. Group II subfamily. D49 sub-subfamily. It depends on Ca(2+) as a cofactor. In terms of tissue distribution, expressed by the venom gland.

The protein resides in the secreted. It catalyses the reaction a 1,2-diacyl-sn-glycero-3-phosphocholine + H2O = a 1-acyl-sn-glycero-3-phosphocholine + a fatty acid + H(+). With respect to regulation, pre-incubation with heparin markedly reduces the neurotoxicity of this toxin. In terms of biological role, snake venom phospholipase A2 (PLA2) that produces neuromuscular blockade in chick biventer cervicis preparations in the absence and presence of crotapotin. In contrast, in mouse phrenic nerve-diaphragm preparations, the neuromuscular blockade is dependent on crotapotin. PLA2 catalyzes the calcium-dependent hydrolysis of the 2-acyl groups in 3-sn-phosphoglycerides. This is Basic phospholipase A2 F16 from Crotalus durissus terrificus (South American rattlesnake).